Here is a 103-residue protein sequence, read N- to C-terminus: Large ribosomal subunit protein bL21 (103 aa).

Belongs to the bacterial ribosomal protein bL21 family. In terms of assembly, part of the 50S ribosomal subunit. Contacts protein L20.

This protein binds to 23S rRNA in the presence of protein L20. This Ruthia magnifica subsp. Calyptogena magnifica protein is Large ribosomal subunit protein bL21.